The chain runs to 94 residues: Long neurotoxin LNTX37 (94 aa).

An N-terminal signal peptide occupies residues 1–21 (MKTLLLTLVVVTIMCLDLGYT). Disulfide bonds link Cys-24–Cys-43, Cys-36–Cys-64, Cys-49–Cys-53, Cys-68–Cys-79, and Cys-80–Cys-85.

The protein belongs to the three-finger toxin family. Long-chain subfamily. Type II alpha-neurotoxin sub-subfamily. As to expression, expressed by the venom gland.

The protein localises to the secreted. In terms of biological role, binds with high affinity to muscular (alpha-1/CHRNA1) and neuronal (alpha-7/CHRNA7) nicotinic acetylcholine receptor (nAChR) and inhibits acetylcholine from binding to the receptor, thereby impairing neuromuscular and neuronal transmission. This chain is Long neurotoxin LNTX37, found in Ophiophagus hannah (King cobra).